We begin with the raw amino-acid sequence, 348 residues long: MAEQQKGLTYADAGVDIDAGNALVERIKPAAKRTARPGTVSGLGGFGALFDLKAAGYHDPVLVAATDGVGTKLRIAIDTGEVDTIGIDLVAMCVNDLVCQGAEPLFFLDYFATGKLEVAQAARIIEGIAEGCAASGCALIGGETAEMPGMYHKGDFDLAGFAVGAMERGADLPQGVAEGDVLLGLGSNGVHSNGYSFVRKVVELSGLGWDAPAPFGGDSLGRALLAPTRLYVKQALAAVRAGGVHALAHITGGGLTENLPRVLPEGLGARIDLSAWELPPVFRWLAETASMAEPELLKTFNCGIGMIVVVAADRADEIAALLAAEGETVTRIGEVIAGEGVSYDGRLL.

Belongs to the AIR synthase family.

The protein resides in the cytoplasm. It catalyses the reaction 2-formamido-N(1)-(5-O-phospho-beta-D-ribosyl)acetamidine + ATP = 5-amino-1-(5-phospho-beta-D-ribosyl)imidazole + ADP + phosphate + H(+). Its pathway is purine metabolism; IMP biosynthesis via de novo pathway; 5-amino-1-(5-phospho-D-ribosyl)imidazole from N(2)-formyl-N(1)-(5-phospho-D-ribosyl)glycinamide: step 2/2. This is Phosphoribosylformylglycinamidine cyclo-ligase from Cereibacter sphaeroides (strain ATCC 17029 / ATH 2.4.9) (Rhodobacter sphaeroides).